We begin with the raw amino-acid sequence, 144 residues long: D-aminoacyl-tRNA deacylase (144 aa).

The Gly-cisPro motif, important for rejection of L-amino acids motif lies at 136–137; that stretch reads GP.

The protein belongs to the DTD family. Homodimer.

Its subcellular location is the cytoplasm. The catalysed reaction is glycyl-tRNA(Ala) + H2O = tRNA(Ala) + glycine + H(+). It catalyses the reaction a D-aminoacyl-tRNA + H2O = a tRNA + a D-alpha-amino acid + H(+). Its function is as follows. An aminoacyl-tRNA editing enzyme that deacylates mischarged D-aminoacyl-tRNAs. Also deacylates mischarged glycyl-tRNA(Ala), protecting cells against glycine mischarging by AlaRS. Acts via tRNA-based rather than protein-based catalysis; rejects L-amino acids rather than detecting D-amino acids in the active site. By recycling D-aminoacyl-tRNA to D-amino acids and free tRNA molecules, this enzyme counteracts the toxicity associated with the formation of D-aminoacyl-tRNA entities in vivo and helps enforce protein L-homochirality. The chain is D-aminoacyl-tRNA deacylase from Aliivibrio salmonicida (strain LFI1238) (Vibrio salmonicida (strain LFI1238)).